The sequence spans 129 residues: Glycine cleavage system H protein (129 aa).

A Lipoyl-binding domain is found at 24-106 (TYTVGITEHA…YAGGWIFKIK (83 aa)). The residue at position 65 (Lys65) is an N6-lipoyllysine.

This sequence belongs to the GcvH family. The glycine cleavage system is composed of four proteins: P, T, L and H. It depends on (R)-lipoate as a cofactor.

Its function is as follows. The glycine cleavage system catalyzes the degradation of glycine. The H protein shuttles the methylamine group of glycine from the P protein to the T protein. The chain is Glycine cleavage system H protein from Escherichia coli O7:K1 (strain IAI39 / ExPEC).